The chain runs to 201 residues: MKNAFFVTASIACGKSTFIEIANSLGFKSISADKIAHKILDENALELEKIFSPFSLKNLLKKEKKIDRKILGEIVFNNKEAKKILENFTHPKIRAKILEQMQILDKENKAFFVEIPLFFESGAYENLGKVIVIYTPKELSLKRIMQRDKLSLEAAKARLDSQIDIEEKLKKADFIIKNTNSYADFRQECVKVIQEISKGNM.

Residues 4–201 (AFFVTASIAC…VIQEISKGNM (198 aa)) enclose the DPCK domain. 12–17 (ACGKST) contacts ATP.

The protein belongs to the CoaE family.

Its subcellular location is the cytoplasm. It carries out the reaction 3'-dephospho-CoA + ATP = ADP + CoA + H(+). It participates in cofactor biosynthesis; coenzyme A biosynthesis; CoA from (R)-pantothenate: step 5/5. Catalyzes the phosphorylation of the 3'-hydroxyl group of dephosphocoenzyme A to form coenzyme A. The chain is Dephospho-CoA kinase from Campylobacter jejuni subsp. jejuni serotype O:2 (strain ATCC 700819 / NCTC 11168).